The sequence spans 222 residues: Protein Thf1 (222 aa).

A coiled-coil region spans residues 169-208 (IEKVKRDLELYRSNLDKINQARSLMKELVEQERKRRAQQT). The interval 197-222 (VEQERKRRAQQTSAPPAVDASSDAPA) is disordered. The span at 209 to 222 (SAPPAVDASSDAPA) shows a compositional bias: low complexity.

It belongs to the THF1 family.

Functionally, may be involved in photosynthetic membrane biogenesis. The polypeptide is Protein Thf1 (Thermosynechococcus vestitus (strain NIES-2133 / IAM M-273 / BP-1)).